The primary structure comprises 391 residues: Polyketide synthase 3 (391 aa).

C164 is a catalytic residue.

This sequence belongs to the thiolase-like superfamily. Chalcone/stilbene synthases family. In terms of assembly, homodimer.

It catalyses the reaction (E)-4-coumaroyl-CoA + 3 malonyl-CoA + 3 H(+) = 2',4,4',6'-tetrahydroxychalcone + 3 CO2 + 4 CoA. It functions in the pathway secondary metabolite biosynthesis; flavonoid biosynthesis. Polyketide synthase producing p-coumaryltriacetic acid lactone (CTAL) and slightly naringenin chalcone. Can use p-coumaryl-CoA as substrate. This is Polyketide synthase 3 (PKS3) from Rubus idaeus (Raspberry).